Consider the following 971-residue polypeptide: Lon protease homolog, mitochondrial (971 aa).

The transit peptide at 1–55 directs the protein to the mitochondrion; it reads MYRAGAVLLRGATRTRLLAAASAHQSFATFSQRNQSILMMKSMELAGNSGERRFY. The Lon N-terminal domain maps to 89-359; the sequence is VPMLAINRYP…IALLLIQKEK (271 aa). A disordered region spans residues 190 to 255; it reads TPKNETPLNG…PPSATGEKQK (66 aa). Residues 214-224 are compositionally biased toward pro residues; the sequence is LTPPPSPPPLA. 512–519 is an ATP binding site; the sequence is GPPGVGKT. Residues 718–749 form a disordered region; that stretch reads AEQQNEDEEPAEKATTAITENSEAEPITSTSS. Over residues 733-749 the composition is skewed to polar residues; the sequence is TAITENSEAEPITSTSS. In terms of domain architecture, Lon proteolytic spans 784–971; that stretch reads VTPPGVIMGL…YDELYEHLFQ (188 aa). Residues Ser878 and Lys921 contribute to the active site.

This sequence belongs to the peptidase S16 family. Homohexamer or homoheptamer. Organized in a ring with a central cavity.

It localises to the mitochondrion matrix. It carries out the reaction Hydrolysis of proteins in presence of ATP.. In terms of biological role, ATP-dependent serine protease that mediates the selective degradation of misfolded, unassembled or oxidatively damaged polypeptides as well as certain short-lived regulatory proteins in the mitochondrial matrix. May also have a chaperone function in the assembly of inner membrane protein complexes. Participates in the regulation of mitochondrial gene expression and in the maintenance of the integrity of the mitochondrial genome. Binds to mitochondrial DNA in a site-specific manner. Involved in the degradation of transcription factor atfs-1 in the mitochondrion. This is Lon protease homolog, mitochondrial from Caenorhabditis elegans.